Reading from the N-terminus, the 148-residue chain is Single-stranded DNA-binding protein, mitochondrial (148 aa).

The transit peptide at 1 to 16 (MFRRPALQVLRQFVRH) directs the protein to the mitochondrion. The region spanning 30 to 141 (LNRVQLLGRV…IIADNIVFLS (112 aa)) is the SSB domain. Phosphoserine occurs at positions 67 and 79. K113 is modified (N6-acetyllysine). Position 122 is an N6-succinyllysine (K122).

In terms of assembly, homotetramer. Interacts with MPG/AAG, through inhibition of its glycosylase activity it potentially prevents formation of DNA breaks in ssDNA, ensuring that base removal primarily occurs in dsDNA. Interacts with POLDIP2. Interacts with PRIMPOL.

Its subcellular location is the mitochondrion. The protein localises to the mitochondrion matrix. The protein resides in the mitochondrion nucleoid. Binds preferentially and cooperatively to pyrimidine rich single-stranded DNA (ss-DNA). In vitro, required to maintain the copy number of mitochondrial DNA (mtDNA) and plays a crucial role during mtDNA replication by stimulating the activity of the replisome components POLG and TWNK at the replication fork. Promotes the activity of the gamma complex polymerase POLG, largely by organizing the template DNA and eliminating secondary structures to favor ss-DNA conformations that facilitate POLG activity. In addition it is able to promote the 5'-3' unwinding activity of the mtDNA helicase TWNK. May also function in mtDNA repair. The sequence is that of Single-stranded DNA-binding protein, mitochondrial (SSBP1) from Oryctolagus cuniculus (Rabbit).